A 198-amino-acid polypeptide reads, in one-letter code: Snake venom metalloproteinase BpirMP (198 aa).

A Peptidase M12B domain is found at 1-197 (TYIEVAVVAD…HNPQCILNEP (197 aa)). Positions 4 and 88 each coordinate Ca(2+). 3 cysteine pairs are disulfide-bonded: Cys112–Cys192, Cys152–Cys176, and Cys154–Cys159. His137 contributes to the Zn(2+) binding site. Residue Glu138 is part of the active site. The Zn(2+) site is built by His141 and His147. Residues Cys192 and Asn195 each coordinate Ca(2+).

It belongs to the venom metalloproteinase (M12B) family. P-I subfamily. In terms of assembly, monomer. It depends on Zn(2+) as a cofactor. Expressed by the venom gland.

It localises to the secreted. Its activity is regulated as follows. Inhibited by the chelating agents EDTA, EGTA and 1,10-phenanthroline. Is not inhibited by serine proteinase inhibitors aprotinin, leupeptin and benzamidine. Its function is as follows. Zinc metalloprotease that preferentially degrades Aalpha chain of fibrinogen (FGA) (at a dose of 5 ug, whereas at a dose of 10 ug, both FGA and FGB are completely degraded). Degrades fibrin gel in a dose-dependent manner, as well blood clots formed in vitro (thrombolytic activity). Induces hemorrhage (in the dorsal skin of mice), with an MHD of 50 ug. The basal membrane components collagen (all chains of type IV) (COL4A4), fibronectin (FN1), laminin and nidogen are all degraded by this toxin. The protein is Snake venom metalloproteinase BpirMP of Bothrops pirajai (Piraja's lancehead).